We begin with the raw amino-acid sequence, 285 residues long: UPF0354 protein SACOL1793 (285 aa).

It belongs to the UPF0354 family.

The chain is UPF0354 protein SACOL1793 from Staphylococcus aureus (strain COL).